A 198-amino-acid chain; its full sequence is Large ribosomal subunit protein bL12m (198 aa).

Residues M1 to L36 constitute a mitochondrion transit peptide. Positions G106–E115 are enriched in low complexity. The disordered stretch occupies residues G106 to E126. N6-acetyllysine is present on residues K125, K138, K142, and K144. K150 is subject to N6-acetyllysine; alternate. At K150 the chain carries N6-succinyllysine; alternate. K150 participates in a covalent cross-link: Glycyl lysine isopeptide (Lys-Gly) (interchain with G-Cter in ubiquitin). K162 is modified (N6-succinyllysine). An N6-acetyllysine mark is found at K163 and K173. An N6-acetyllysine; alternate modification is found at K178. An N6-succinyllysine; alternate modification is found at K178. K185 carries the post-translational modification N6-acetyllysine.

Belongs to the bacterial ribosomal protein bL12 family. As to quaternary structure, component of the mitochondrial ribosome large subunit (39S) which comprises a 16S rRNA and about 50 distinct proteins. Interacts with NOA1. Post-translationally, two mature forms are produced by differential two-step proteolytic cleavage. Cleaved by the mitochondrial processing protease to produce the long mature form and subsequently by the mitochondrial intermediate protease to produce the short mature form. In the presence of CUL3, undergoes 'Lys-63'-linked ubiquitination at Lys-150 which results in proteasomal degradation.

The protein resides in the mitochondrion matrix. Its function is as follows. As a component of the mitochondrial large ribosomal subunit, plays a role in mitochondrial translation. When present in mitochondria as a free protein not associated with the ribosome, associates with mitochondrial RNA polymerase POLRMT to activate transcription. Required for POLRMT stability. This Bos taurus (Bovine) protein is Large ribosomal subunit protein bL12m (MRPL12).